Consider the following 183-residue polypeptide: I-kappa-B like protein N2 (183 aa).

ANK repeat units lie at residues 62 to 95 and 99 to 129; these read DGNT…DLNL and CHKP…NLEA. Positions 163–183 are disordered; it reads PRQDGSSEDEVSDSEEKSDSE.

This sequence belongs to the polydnaviridae I-Kappa-B like protein family.

Functionally, suppresses the host immune response through NF-kappa-B inactivation. Possesses ankyrin repeat domains required for NF-kappa-B binding but lacks the regulatory regions required for dissociation from NF-kappa-B and degradation. Therefore, prevents host NF-kappa-B release and subsequent activation. This is I-kappa-B like protein N2 (N5) from Microplitis demolitor (Parasitoid wasp).